A 265-amino-acid chain; its full sequence is Beta-lactamase OXA-48 (265 aa).

An N-terminal signal peptide occupies residues 1–22 (MRVLALSAVFLVASIIGMPAVA). S70 functions as the Acyl-ester intermediate in the catalytic mechanism. 4 residues coordinate a beta-lactam: S70, K73, S118, and R250. At K73 the chain carries N6-carboxylysine.

The protein belongs to the class-D beta-lactamase family. Monomer. Dimer. In terms of processing, carboxylated on the epsilon-amino group of a lysine, with the resulting carbamate functional group serving as a general base. Probably N-carboxylated at Lys-73 at neutral pH in vivo and undergoes complete N-decarboxylation, at pH 4.1, in vitro.

The catalysed reaction is a beta-lactam + H2O = a substituted beta-amino acid. Its activity is regulated as follows. Inhibited by avibactam, related diazabicyclooctane (DBO) derivatives and by bicyclic boronic acids, via a covalent binding to Ser-70. Inhibited by chloride, bromide and iodide ions. Not inhibited by the beta-lactamase-blocking agents, clavulanic acid or tazobactam. Its function is as follows. Class D beta-lactamase which confers resistance to the beta-lactam antibiotics, including amoxicillin, and moderate resistance to cephalosporins and carbapenems such as cephalothin and imipenem; in the DH10B strain of E.coli. Acts via hydrolysis of the beta-lactam ring. Has oxacillin-, cephalothin- and imipenem-hydrolyzing activities. In Klebsiella pneumoniae, this protein is Beta-lactamase OXA-48.